We begin with the raw amino-acid sequence, 408 residues long: MGLIVQKFGGTSVGSVEKIQNAANRAIAEKQKGHQVVVVVSAMGKSTDELVSLAKAISDQPSKREMDMLLATGEQVTISLLSMALQEKGYDAVSYTGWQAGIRTEAIHGNARITDIDTSVLADQLEKGKIVIVAGFQGMTEDCEITTLGRGGSDTTAVALAAALKADKCDIYTDVPGVFTTDPRYVKSARKLEGISYDEMLELANLGAGVLHPRAVEFAKNYQVPLEVRSSTETEAGTLIEEESSMEQNLIVRGIAFEDQITRVTIYGLTSGLTTLSTIFTTLAKRNINVDIIIQTQAEDKTGISFSVKTEDADQTVAVLEEYKDALEFEKIETESKLAKVSIVGSGMVSNPGVAAEMFAVLAQKNILIKMVSTSEIKVSTVVSENDMVKAVESLHDAFELSKHPSAV.

Position 7-10 (7-10) interacts with ATP; it reads KFGG. A substrate-binding site is contributed by 25-30; it reads RAIAEK. Ser41 is a binding site for ATP. Substrate contacts are provided by residues 47–49, Glu74, 125–126, 150–153, and Ser153; these read TDE, LE, and RGGS. ATP contacts are provided by residues 173-174 and 179-184; these read TD and FTTDPR. 2 ACT domains span residues 264 to 337 and 343 to 408; these read VTIY…TESK and IVGS…PSAV. Substrate contacts are provided by residues 289–291, Gln295, 354–355, 368–369, and 375–376; these read NVD, VA, LI, and SE.

This sequence belongs to the aspartokinase family. As to quaternary structure, tetramer consisting of 2 isoforms Alpha (catalytic and regulation) and of a homodimer of 2 isoforms Beta (regulation).

It carries out the reaction L-aspartate + ATP = 4-phospho-L-aspartate + ADP. It participates in amino-acid biosynthesis; L-lysine biosynthesis via DAP pathway; (S)-tetrahydrodipicolinate from L-aspartate: step 1/4. The protein operates within amino-acid biosynthesis; L-methionine biosynthesis via de novo pathway; L-homoserine from L-aspartate: step 1/3. Its pathway is amino-acid biosynthesis; L-threonine biosynthesis; L-threonine from L-aspartate: step 1/5. Its activity is regulated as follows. Lysine-sensitive. Regulated by degradation in response to starvation of cells for various nutrients. Ammonium starvation induced the fastest aspartokinase II decline, followed by amino acid starvation and glucose limitation. Catalyzes the phosphorylation of the beta-carboxyl group of aspartic acid with ATP to yield 4-phospho-L-aspartate, which is involved in the branched biosynthetic pathway leading to the biosynthesis of amino acids threonine, isoleucine and methionine. This chain is Aspartokinase 2 (lysC), found in Bacillus subtilis (strain 168).